Reading from the N-terminus, the 484-residue chain is Dual specificity protein kinase CLK1 (484 aa).

Residues methionine 1–lysine 42 form a disordered region. Residues serine 26–histidine 35 are compositionally biased toward basic residues. The residue at position 61 (serine 61) is a Phosphoserine. The segment at aspartate 79–glutamate 146 is disordered. A compositionally biased stretch (basic and acidic residues) spans proline 86–tyrosine 97. Residues histidine 100–serine 112 show a composition bias toward low complexity. Over residues tyrosine 113–threonine 138 the composition is skewed to basic residues. A Phosphothreonine modification is found at threonine 138. Phosphoserine is present on serine 140. The Protein kinase domain occupies tyrosine 161–phenylalanine 477. ATP-binding positions include leucine 167–valine 175 and lysine 191. Aspartate 288 functions as the Proton acceptor in the catalytic mechanism.

It belongs to the protein kinase superfamily. CMGC Ser/Thr protein kinase family. Lammer subfamily. As to quaternary structure, interacts with PPIG and UBL5. Autophosphorylates on all three types of residues. In terms of tissue distribution, endothelial cells.

Its subcellular location is the nucleus. It carries out the reaction L-seryl-[protein] + ATP = O-phospho-L-seryl-[protein] + ADP + H(+). The enzyme catalyses L-threonyl-[protein] + ATP = O-phospho-L-threonyl-[protein] + ADP + H(+). It catalyses the reaction L-tyrosyl-[protein] + ATP = O-phospho-L-tyrosyl-[protein] + ADP + H(+). With respect to regulation, regulates splicing of its own pre-mRNA according to its kinase activity; increased expression of the catalytically active form influences splicing to generate the catalytically inactive splicing variant lacking the kinase domain. Leucettine L41 inhibits its kinase activity and affects the regulation of alternative splicing mediated by phosphorylation of SR proteins. Its function is as follows. Dual specificity kinase acting on both serine/threonine and tyrosine-containing substrates. Phosphorylates serine- and arginine-rich (SR) proteins of the spliceosomal complex and may be a constituent of a network of regulatory mechanisms that enable SR proteins to control RNA splicing. Phosphorylates: SRSF1, SRSF3 and PTPN1. Regulates the alternative splicing of tissue factor (F3) pre-mRNA in endothelial cells. The sequence is that of Dual specificity protein kinase CLK1 from Homo sapiens (Human).